The primary structure comprises 294 residues: Cytidine deaminase (294 aa).

2 CMP/dCMP-type deaminase domains span residues 48-168 (DEDA…FGPK) and 186-294 (LTGD…VLLG). Position 89–91 (89–91 (NME)) interacts with substrate. His-102 is a Zn(2+) binding site. The active-site Proton donor is the Glu-104. Positions 129 and 132 each coordinate Zn(2+).

It belongs to the cytidine and deoxycytidylate deaminase family. As to quaternary structure, homodimer. Zn(2+) serves as cofactor.

The enzyme catalyses cytidine + H2O + H(+) = uridine + NH4(+). It carries out the reaction 2'-deoxycytidine + H2O + H(+) = 2'-deoxyuridine + NH4(+). Its function is as follows. This enzyme scavenges exogenous and endogenous cytidine and 2'-deoxycytidine for UMP synthesis. The chain is Cytidine deaminase from Salmonella schwarzengrund (strain CVM19633).